The chain runs to 641 residues: DNA primase (641 aa).

Residues 41–65 (CPFHDEKSPSFQVSPSKGFFHCFGC) form a CHC2-type zinc finger. The Toprim domain maps to 262-346 (SRAVVVEGYT…AAETYIAIAP (85 aa)). The Mg(2+) site is built by E268, D317, and D319. The tract at residues 444–478 (RDRGGKGPAPDQRQRGGGPQQQAGPMTATPRGPAL) is disordered.

It belongs to the DnaG primase family. In terms of assembly, monomer. Interacts with DnaB. Requires Zn(2+) as cofactor. It depends on Mg(2+) as a cofactor.

It catalyses the reaction ssDNA + n NTP = ssDNA/pppN(pN)n-1 hybrid + (n-1) diphosphate.. Functionally, RNA polymerase that catalyzes the synthesis of short RNA molecules used as primers for DNA polymerase during DNA replication. This Streptomyces coelicolor (strain ATCC BAA-471 / A3(2) / M145) protein is DNA primase.